Reading from the N-terminus, the 458-residue chain is Serine--tRNA ligase (458 aa).

252–254 (TAE) contributes to the L-serine binding site. ATP is bound by residues 283-285 (RKE) and Val-299. Glu-306 serves as a coordination point for L-serine. 370 to 373 (EMVS) contributes to the ATP binding site. Thr-405 contributes to the L-serine binding site.

The protein belongs to the class-II aminoacyl-tRNA synthetase family. Type-1 seryl-tRNA synthetase subfamily. In terms of assembly, homodimer. The tRNA molecule binds across the dimer.

It localises to the cytoplasm. The enzyme catalyses tRNA(Ser) + L-serine + ATP = L-seryl-tRNA(Ser) + AMP + diphosphate + H(+). It catalyses the reaction tRNA(Sec) + L-serine + ATP = L-seryl-tRNA(Sec) + AMP + diphosphate + H(+). It participates in aminoacyl-tRNA biosynthesis; selenocysteinyl-tRNA(Sec) biosynthesis; L-seryl-tRNA(Sec) from L-serine and tRNA(Sec): step 1/1. Catalyzes the attachment of serine to tRNA(Ser). Is also able to aminoacylate tRNA(Sec) with serine, to form the misacylated tRNA L-seryl-tRNA(Sec), which will be further converted into selenocysteinyl-tRNA(Sec). The sequence is that of Serine--tRNA ligase from Sulfolobus acidocaldarius (strain ATCC 33909 / DSM 639 / JCM 8929 / NBRC 15157 / NCIMB 11770).